A 298-amino-acid chain; its full sequence is Tyrosine recombinase XerC (298 aa).

The 87-residue stretch at 2–88 (TDLHTDVERY…ALRSFFDWLV (87 aa)) folds into the Core-binding (CB) domain. The region spanning 109–288 (HLPKNIDVDD…DFQHLASVYD (180 aa)) is the Tyr recombinase domain. Active-site residues include arginine 148, lysine 172, histidine 240, arginine 243, and histidine 266. Catalysis depends on tyrosine 275, which acts as the O-(3'-phospho-DNA)-tyrosine intermediate.

Belongs to the 'phage' integrase family. XerC subfamily. Forms a cyclic heterotetrameric complex composed of two molecules of XerC and two molecules of XerD, in which XerC interacts with XerD via its C-terminal region, XerD interacts with XerC via its C-terminal region and so on.

The protein resides in the cytoplasm. With respect to regulation, ftsK may regulate the catalytic switch between XerC and XerD in the heterotetrameric complex during the two steps of the recombination process. Functionally, site-specific tyrosine recombinase, which acts by catalyzing the cutting and rejoining of the recombining DNA molecules. Binds cooperatively to specific DNA consensus sequences that are separated from XerD binding sites by a short central region, forming the heterotetrameric XerC-XerD complex that recombines DNA substrates. The complex is essential to convert dimers of the bacterial chromosome into monomers to permit their segregation at cell division. It also contributes to the segregational stability of plasmids. In the complex XerC specifically exchanges the top DNA strands. The chain is Tyrosine recombinase XerC from Escherichia coli O139:H28 (strain E24377A / ETEC).